The primary structure comprises 190 residues: Peptidyl-tRNA hydrolase (190 aa).

Phenylalanine 14 serves as a coordination point for tRNA. Histidine 19 acts as the Proton acceptor in catalysis. TRNA contacts are provided by methionine 64, asparagine 66, and asparagine 112.

Belongs to the PTH family. Monomer.

Its subcellular location is the cytoplasm. It catalyses the reaction an N-acyl-L-alpha-aminoacyl-tRNA + H2O = an N-acyl-L-amino acid + a tRNA + H(+). In terms of biological role, hydrolyzes ribosome-free peptidyl-tRNAs (with 1 or more amino acids incorporated), which drop off the ribosome during protein synthesis, or as a result of ribosome stalling. Catalyzes the release of premature peptidyl moieties from peptidyl-tRNA molecules trapped in stalled 50S ribosomal subunits, and thus maintains levels of free tRNAs and 50S ribosomes. In Staphylococcus epidermidis (strain ATCC 35984 / DSM 28319 / BCRC 17069 / CCUG 31568 / BM 3577 / RP62A), this protein is Peptidyl-tRNA hydrolase.